The sequence spans 242 residues: Small ribosomal subunit protein uS2 (242 aa).

This sequence belongs to the universal ribosomal protein uS2 family.

The chain is Small ribosomal subunit protein uS2 from Aliivibrio fischeri (strain ATCC 700601 / ES114) (Vibrio fischeri).